The following is a 363-amino-acid chain: UDP-N-acetylglucosamine--N-acetylmuramyl-(pentapeptide) pyrophosphoryl-undecaprenol N-acetylglucosamine transferase (363 aa).

UDP-N-acetyl-alpha-D-glucosamine contacts are provided by residues 10–12 (TGG), N124, S195, and Q295.

Belongs to the glycosyltransferase 28 family. MurG subfamily.

The protein resides in the cell membrane. The enzyme catalyses di-trans,octa-cis-undecaprenyl diphospho-N-acetyl-alpha-D-muramoyl-L-alanyl-D-glutamyl-meso-2,6-diaminopimeloyl-D-alanyl-D-alanine + UDP-N-acetyl-alpha-D-glucosamine = di-trans,octa-cis-undecaprenyl diphospho-[N-acetyl-alpha-D-glucosaminyl-(1-&gt;4)]-N-acetyl-alpha-D-muramoyl-L-alanyl-D-glutamyl-meso-2,6-diaminopimeloyl-D-alanyl-D-alanine + UDP + H(+). It participates in cell wall biogenesis; peptidoglycan biosynthesis. Cell wall formation. Catalyzes the transfer of a GlcNAc subunit on undecaprenyl-pyrophosphoryl-MurNAc-pentapeptide (lipid intermediate I) to form undecaprenyl-pyrophosphoryl-MurNAc-(pentapeptide)GlcNAc (lipid intermediate II). In Bacillus subtilis (strain 168), this protein is UDP-N-acetylglucosamine--N-acetylmuramyl-(pentapeptide) pyrophosphoryl-undecaprenol N-acetylglucosamine transferase.